Consider the following 346-residue polypeptide: Histidinol-phosphate aminotransferase (346 aa).

Lysine 209 carries the N6-(pyridoxal phosphate)lysine modification.

This sequence belongs to the class-II pyridoxal-phosphate-dependent aminotransferase family. Histidinol-phosphate aminotransferase subfamily. As to quaternary structure, homodimer. Pyridoxal 5'-phosphate is required as a cofactor.

It catalyses the reaction L-histidinol phosphate + 2-oxoglutarate = 3-(imidazol-4-yl)-2-oxopropyl phosphate + L-glutamate. The protein operates within amino-acid biosynthesis; L-histidine biosynthesis; L-histidine from 5-phospho-alpha-D-ribose 1-diphosphate: step 7/9. The sequence is that of Histidinol-phosphate aminotransferase from Vibrio parahaemolyticus serotype O3:K6 (strain RIMD 2210633).